Consider the following 1520-residue polypeptide: Myosin-5 (1520 aa).

The Myosin N-terminal SH3-like domain maps to Ile7–Ala56. Positions Gly59–Ala729 constitute a Myosin motor domain. ATP contacts are provided by residues Gly153–Thr160 and Asn206–Lys214. 4 actin-binding regions span residues Leu492–Phe526, Glu528–Val551, Phe586–Leu610, and Leu610–Asn632. IQ domains lie at Leu732–Val761, Ile755–Ala784, Ile780–Val809, Thr803–Ala832, Gln828–Val857, and Leu851–Asp880. The stretch at Thr881–Gln1047 forms a coiled coil. The interval Pro1062–Lys1100 is disordered. The span at Phe1076–Glu1086 shows a compositional bias: polar residues. The 316-residue stretch at Asn1148–Asp1463 folds into the Dilute domain.

Belongs to the TRAFAC class myosin-kinesin ATPase superfamily. Myosin family. Plant myosin class XI subfamily. As to quaternary structure, homodimer. Interacts with MYOB1 and MYOB2. Interacts with PHOX1.

Its subcellular location is the cytoplasm. Myosin heavy chain that is required for the cell cycle-regulated transport of various organelles and proteins for their segregation. Functions by binding with its tail domain to receptor proteins on organelles and exerting force with its N-terminal motor domain against actin filaments, thereby transporting its cargo along polarized actin cables. Contributes to the trafficking of Golgi stacks, mitochondria and peroxisomes. Required for development of pavement cells, trichomes, and stigmatic papillae. This is Myosin-5 (XI-1) from Arabidopsis thaliana (Mouse-ear cress).